A 116-amino-acid chain; its full sequence is Large ribosomal subunit protein uL22c (116 aa).

This sequence belongs to the universal ribosomal protein uL22 family. As to quaternary structure, part of the 50S ribosomal subunit.

It is found in the plastid. Its subcellular location is the chloroplast. In terms of biological role, this protein binds specifically to 23S rRNA. Functionally, the globular domain of the protein is located near the polypeptide exit tunnel on the outside of the subunit, while an extended beta-hairpin is found that lines the wall of the exit tunnel in the center of the 70S ribosome. This is Large ribosomal subunit protein uL22c (rpl22) from Porphyra purpurea (Red seaweed).